A 674-amino-acid polypeptide reads, in one-letter code: Phosphopantothenoylcysteine decarboxylase subunit VHS3 (674 aa).

Disordered regions lie at residues 1-164 (MTNK…SILS), 190-230 (LNSD…RPSV), 348-368 (QHNS…NITG), 384-426 (TSSN…SNVV), and 575-674 (VSAG…LQRS). The segment covering 15–81 (ASNTLSGAEQ…TSGAVVSNTP (67 aa)) has biased composition (polar residues). Threonine 90 is subject to Phosphothreonine. The segment covering 106–116 (EQTPPNQVARQ) has biased composition (polar residues). A compositionally biased stretch (basic and acidic residues) spans 137-150 (NLKDINTKVPKDGE). Polar residues predominate over residues 152–164 (SASSFSTPTSILS). Residues 198-212 (SPRKEHPHFYVEDPL) are compositionally biased toward basic and acidic residues. Residues 214-230 (TPSVRSRSNSTSPRPSV) show a composition bias toward low complexity. The span at 351–368 (SIDTSFNSTNSNAGNITG) shows a compositional bias: polar residues. Residues 384–395 (TSSNSAASQTNN) show a composition bias toward low complexity. Residues 403–426 (MASTTGFPSTLGGSRTYSNSSNVV) are compositionally biased toward polar residues. The span at 580-591 (EEEEDEDNDEED) shows a compositional bias: acidic residues. Over residues 592–602 (DNKKNDTGGKD) the composition is skewed to basic and acidic residues. A compositionally biased stretch (acidic residues) spans 603–660 (EDNDDDDDDDDDDDDDDDDDDDDDDDDDDDDDDDDDDDDDDDDDDDDDEDDEDEDEDD). Residues 661-674 (EGKKKEDKGGLQRS) show a composition bias toward basic and acidic residues.

The protein belongs to the HFCD (homooligomeric flavin containing Cys decarboxylase) superfamily. Interacts with the C-terminal domain of PPZ1. Component of the phosphopantothenoylcysteine decarboxylase (PPCDC) complex, a heterotrimer composed of CAB3, SIS2 and VHS3.

Its function is as follows. Component of the phosphopantothenoylcysteine decarboxylase (PPCDC) involved in the coenzyme A synthesis. Acts as an inhibitory subunit of protein phosphatase PPZ1, which is involved in many cellular processes such as G1-S transition or salt tolerance. The chain is Phosphopantothenoylcysteine decarboxylase subunit VHS3 (VHS3) from Saccharomyces cerevisiae (strain ATCC 204508 / S288c) (Baker's yeast).